Consider the following 149-residue polypeptide: MVLILNGPNLNLLGRREPEVYGRTTLEELEALCEAWGAELGLGVVFRQTNYEGQLIEWVQQAHQEGFLAIVLNPGALTHYSYALLDAIRAQPLPVVEVHLTNLHAREEFRRHSVTAPACRGIVSGFGPLSYKLALVYLAETLEVGGEGF.

Tyr-21 serves as the catalytic Proton acceptor. Substrate is bound by residues Asn-73, His-79, and Asp-86. His-99 (proton donor) is an active-site residue. Substrate contacts are provided by residues 100–101 (LT) and Arg-110.

Belongs to the type-II 3-dehydroquinase family. Homododecamer.

The catalysed reaction is 3-dehydroquinate = 3-dehydroshikimate + H2O. It participates in metabolic intermediate biosynthesis; chorismate biosynthesis; chorismate from D-erythrose 4-phosphate and phosphoenolpyruvate: step 3/7. Functionally, catalyzes a trans-dehydration via an enolate intermediate. The polypeptide is 3-dehydroquinate dehydratase (Thermus thermophilus (strain ATCC BAA-163 / DSM 7039 / HB27)).